We begin with the raw amino-acid sequence, 62 residues long: Photosystem II reaction center protein Z (62 aa).

Transmembrane regions (helical) follow at residues 8-28 (AVFA…VALA) and 41-61 (FSGV…NSFI).

The protein belongs to the PsbZ family. PSII is composed of 1 copy each of membrane proteins PsbA, PsbB, PsbC, PsbD, PsbE, PsbF, PsbH, PsbI, PsbJ, PsbK, PsbL, PsbM, PsbT, PsbY, PsbZ, Psb30/Ycf12, at least 3 peripheral proteins of the oxygen-evolving complex and a large number of cofactors. It forms dimeric complexes.

It localises to the plastid. Its subcellular location is the chloroplast thylakoid membrane. May control the interaction of photosystem II (PSII) cores with the light-harvesting antenna, regulates electron flow through the 2 photosystem reaction centers. PSII is a light-driven water plastoquinone oxidoreductase, using light energy to abstract electrons from H(2)O, generating a proton gradient subsequently used for ATP formation. The chain is Photosystem II reaction center protein Z from Pinus thunbergii (Japanese black pine).